The sequence spans 556 residues: Urocanate hydratase (556 aa).

Residues 52–53, glutamine 130, 176–178, glutamate 196, arginine 201, 242–243, 263–267, 273–274, and tyrosine 322 contribute to the NAD(+) site; these read GG, GMG, NA, QTSAH, and YL. The active site involves cysteine 410. Position 492 (glycine 492) interacts with NAD(+).

It belongs to the urocanase family. It depends on NAD(+) as a cofactor.

It is found in the cytoplasm. It catalyses the reaction 4-imidazolone-5-propanoate = trans-urocanate + H2O. The protein operates within amino-acid degradation; L-histidine degradation into L-glutamate; N-formimidoyl-L-glutamate from L-histidine: step 2/3. Catalyzes the conversion of urocanate to 4-imidazolone-5-propionate. This is Urocanate hydratase from Bradyrhizobium diazoefficiens (strain JCM 10833 / BCRC 13528 / IAM 13628 / NBRC 14792 / USDA 110).